Reading from the N-terminus, the 269-residue chain is uncharacterized protein (269 aa).

Helical transmembrane passes span 21-43 (LNVW…ILFT), 48-70 (LFLI…FSLI), 121-143 (YLIL…VFTF), 147-166 (FIIA…FWII), 205-227 (SLEV…LFQF), and 242-264 (FVAF…YLLW).

The protein localises to the cell membrane. This is an uncharacterized protein from Aquifex aeolicus (strain VF5).